Reading from the N-terminus, the 547-residue chain is Hydroxylamine reductase (547 aa).

Cys5, Cys8, Cys17, and Cys23 together coordinate [4Fe-4S] cluster. Residues His242, Glu266, Cys310, Cys401, Cys429, Cys454, Glu489, and Lys491 each coordinate hybrid [4Fe-2O-2S] cluster. Residue Cys401 is modified to Cysteine persulfide.

It belongs to the HCP family. The cofactor is [4Fe-4S] cluster. Requires hybrid [4Fe-2O-2S] cluster as cofactor.

The protein resides in the cytoplasm. It carries out the reaction A + NH4(+) + H2O = hydroxylamine + AH2 + H(+). Its function is as follows. Catalyzes the reduction of hydroxylamine to form NH(3) and H(2)O. The sequence is that of Hydroxylamine reductase from Thermoanaerobacter pseudethanolicus (strain ATCC 33223 / 39E) (Clostridium thermohydrosulfuricum).